Reading from the N-terminus, the 379-residue chain is Homoserine O-succinyltransferase (379 aa).

The 310-residue stretch at 51 to 360 (NAVLICHALS…DAPQGHDAFL (310 aa)) folds into the AB hydrolase-1 domain. Serine 157 serves as the catalytic Nucleophile. Residue arginine 227 coordinates substrate. Residues aspartate 323 and histidine 356 contribute to the active site. Residue aspartate 357 coordinates substrate.

This sequence belongs to the AB hydrolase superfamily. MetX family. In terms of assembly, homodimer.

It is found in the cytoplasm. It carries out the reaction L-homoserine + succinyl-CoA = O-succinyl-L-homoserine + CoA. It participates in amino-acid biosynthesis; L-methionine biosynthesis via de novo pathway; O-succinyl-L-homoserine from L-homoserine: step 1/1. In terms of biological role, transfers a succinyl group from succinyl-CoA to L-homoserine, forming succinyl-L-homoserine. The sequence is that of Homoserine O-succinyltransferase from Pseudomonas savastanoi pv. phaseolicola (strain 1448A / Race 6) (Pseudomonas syringae pv. phaseolicola (strain 1448A / Race 6)).